Consider the following 235-residue polypeptide: Ribitol-5-phosphate cytidylyltransferase (235 aa).

CTP-binding positions include 7-10, 82-88, and serine 113; these read LAGG and GADRNTS.

This sequence belongs to the IspD/TarI cytidylyltransferase family. TarI subfamily.

The enzyme catalyses D-ribitol 5-phosphate + CTP + H(+) = CDP-L-ribitol + diphosphate. It functions in the pathway cell wall biogenesis; poly(ribitol phosphate) teichoic acid biosynthesis. Functionally, catalyzes the transfer of the cytidylyl group of CTP to D-ribitol 5-phosphate. The polypeptide is Ribitol-5-phosphate cytidylyltransferase (Streptococcus pneumoniae serotype 19F (strain G54)).